We begin with the raw amino-acid sequence, 386 residues long: Acetylornithine aminotransferase (386 aa).

Pyridoxal 5'-phosphate-binding positions include 94–95 and phenylalanine 121; that span reads GT. Arginine 124 contributes to the N(2)-acetyl-L-ornithine binding site. 206–209 is a pyridoxal 5'-phosphate binding site; it reads DEVQ. Lysine 235 bears the N6-(pyridoxal phosphate)lysine mark. Serine 263 contacts N(2)-acetyl-L-ornithine. Threonine 264 lines the pyridoxal 5'-phosphate pocket.

This sequence belongs to the class-III pyridoxal-phosphate-dependent aminotransferase family. ArgD subfamily. In terms of assembly, homodimer. The cofactor is pyridoxal 5'-phosphate.

The protein resides in the cytoplasm. It carries out the reaction N(2)-acetyl-L-ornithine + 2-oxoglutarate = N-acetyl-L-glutamate 5-semialdehyde + L-glutamate. Its pathway is amino-acid biosynthesis; L-arginine biosynthesis; N(2)-acetyl-L-ornithine from L-glutamate: step 4/4. The polypeptide is Acetylornithine aminotransferase (Listeria monocytogenes serotype 4b (strain F2365)).